The primary structure comprises 70 residues: Exodeoxyribonuclease 7 small subunit (70 aa).

It belongs to the XseB family. Heterooligomer composed of large and small subunits.

Its subcellular location is the cytoplasm. It carries out the reaction Exonucleolytic cleavage in either 5'- to 3'- or 3'- to 5'-direction to yield nucleoside 5'-phosphates.. In terms of biological role, bidirectionally degrades single-stranded DNA into large acid-insoluble oligonucleotides, which are then degraded further into small acid-soluble oligonucleotides. The chain is Exodeoxyribonuclease 7 small subunit from Streptococcus sanguinis (strain SK36).